A 132-amino-acid chain; its full sequence is MGVSDPVADMLTKIRNAARAGHEKVDVPSSKLKVEVVKILKTEGYIRNFRKVEEDGSGCIRVFLKYDDNETSVIHGIERISTPGRRVYSGYKTLRRVYNGYGTLIVSTSLGVTTGRHAREQRVGGELICKVW.

The protein belongs to the universal ribosomal protein uS8 family. Part of the 30S ribosomal subunit. Contacts proteins S5 and S12.

In terms of biological role, one of the primary rRNA binding proteins, it binds directly to 16S rRNA central domain where it helps coordinate assembly of the platform of the 30S subunit. This is Small ribosomal subunit protein uS8 from Treponema pallidum (strain Nichols).